The following is a 178-amino-acid chain: Large ribosomal subunit protein uL6 (178 aa).

The protein belongs to the universal ribosomal protein uL6 family. Part of the 50S ribosomal subunit.

Functionally, this protein binds to the 23S rRNA, and is important in its secondary structure. It is located near the subunit interface in the base of the L7/L12 stalk, and near the tRNA binding site of the peptidyltransferase center. The sequence is that of Large ribosomal subunit protein uL6 from Helicobacter pylori (strain J99 / ATCC 700824) (Campylobacter pylori J99).